The primary structure comprises 397 residues: Succinate--CoA ligase [ADP-forming] subunit beta (397 aa).

Positions 9-254 (KALLKGYGAP…ETEEDAKEIE (246 aa)) constitute an ATP-grasp domain. ATP is bound by residues Lys-46, 53–55 (GRG), Glu-109, Ala-112, and Glu-117. 2 residues coordinate Mg(2+): Asn-209 and Asp-223. Substrate-binding positions include Asn-274 and 331–333 (GIM).

Belongs to the succinate/malate CoA ligase beta subunit family. In terms of assembly, heterotetramer of two alpha and two beta subunits. Mg(2+) serves as cofactor.

It catalyses the reaction succinate + ATP + CoA = succinyl-CoA + ADP + phosphate. The catalysed reaction is GTP + succinate + CoA = succinyl-CoA + GDP + phosphate. The protein operates within carbohydrate metabolism; tricarboxylic acid cycle; succinate from succinyl-CoA (ligase route): step 1/1. In terms of biological role, succinyl-CoA synthetase functions in the citric acid cycle (TCA), coupling the hydrolysis of succinyl-CoA to the synthesis of either ATP or GTP and thus represents the only step of substrate-level phosphorylation in the TCA. The beta subunit provides nucleotide specificity of the enzyme and binds the substrate succinate, while the binding sites for coenzyme A and phosphate are found in the alpha subunit. The sequence is that of Succinate--CoA ligase [ADP-forming] subunit beta from Rhizobium etli (strain CIAT 652).